A 365-amino-acid chain; its full sequence is MVANTTGEIFKVTTFGLSHGKALGATIDGCPAGLNLSNEDIQNELNKRRPGTSNLTTSRDEKDKVEILSGIFNGMTDGTPITAIIFNKDQRSKNYDNLKNNPRPGHGDFCWREKFGNYDYRGGGRGSGRVTIGHVIGGAVSKKLLQQHNITTTAHVTSIHNIHSTKKFTLNTIKENITKNNVRCADLEVATLMEDEILKLKERGDSTGGKVEIIIDNVPVGLGQPVFDKIDGDFAKALMNIGAVKAVEVGCGIESSTLTGHEMNDEYYIEDNKIQTKTNNAGGIVGGMTNGMPIILKISVKPTPSVSGIQNTVNLEKRENSTIEIEGRHDPCICPRITTVAEAVCNMVLADHMIRAGYIHPDKIN.

An NADP(+)-binding site is contributed by arginine 48. FMN is bound by residues 125 to 127 (RGS), glycine 286, 301 to 305 (KPTPS), and arginine 328.

It belongs to the chorismate synthase family. It depends on FMNH2 as a cofactor.

The catalysed reaction is 5-O-(1-carboxyvinyl)-3-phosphoshikimate = chorismate + phosphate. It participates in metabolic intermediate biosynthesis; chorismate biosynthesis; chorismate from D-erythrose 4-phosphate and phosphoenolpyruvate: step 7/7. Catalyzes the anti-1,4-elimination of the C-3 phosphate and the C-6 proR hydrogen from 5-enolpyruvylshikimate-3-phosphate (EPSP) to yield chorismate, which is the branch point compound that serves as the starting substrate for the three terminal pathways of aromatic amino acid biosynthesis. This reaction introduces a second double bond into the aromatic ring system. The protein is Chorismate synthase of Methanosphaera stadtmanae (strain ATCC 43021 / DSM 3091 / JCM 11832 / MCB-3).